Reading from the N-terminus, the 84-residue chain is Cytochrome b559 subunit alpha (84 aa).

Residues 22 to 36 (IIHIPAITILFASGF) form a helical membrane-spanning segment. His-24 is a heme binding site.

Belongs to the PsbE/PsbF family. In terms of assembly, heterodimer of an alpha subunit and a beta subunit. PSII is composed of 1 copy each of membrane proteins PsbA, PsbB, PsbC, PsbD, PsbE, PsbF, PsbH, PsbI, PsbJ, PsbK, PsbL, PsbM, PsbT, PsbX, Psb30/Ycf12, peripheral proteins PsbO, CyanoQ (PsbQ), PsbU, PsbV and a large number of cofactors. It forms dimeric complexes. Heme b is required as a cofactor.

It localises to the cell inner membrane. Functionally, this b-type cytochrome is tightly associated with the reaction center of photosystem II (PSII). PSII is a light-driven water:plastoquinone oxidoreductase that uses light energy to abstract electrons from H(2)O, generating O(2) and a proton gradient subsequently used for ATP formation. It consists of a core antenna complex that captures photons, and an electron transfer chain that converts photonic excitation into a charge separation. The sequence is that of Cytochrome b559 subunit alpha from Gloeobacter violaceus (strain ATCC 29082 / PCC 7421).